Here is a 489-residue protein sequence, read N- to C-terminus: FAD-containing monooxygenase EthA (489 aa).

FAD contacts are provided by residues serine 15, glutamate 36, 44-47, aspartate 56, and valine 104; that span reads TWDL. Residue 54-56 participates in NADP(+) binding; that stretch reads RSD. NADP(+) is bound by residues 183 to 189 and 207 to 208; these read SGATAVT and RS.

Belongs to the FAD-binding monooxygenase family. It depends on FAD as a cofactor.

Its subcellular location is the cell membrane. The enzyme catalyses ethionamide + NADPH + O2 + H(+) = ethionamide S-oxide + NADP(+) + H2O. Functionally, monooxygenase able to convert a wide range of ketones to the corresponding esters or lactones via a Baeyer-Villiger oxidation reaction. Can act on long-chain aliphatic ketones (2-hexanone to 2-dodecanone) and on aromatic ketones (phenylacetone and benzylacetone). Is also able to catalyze enantioselective sulfoxidation of methyl-p-tolylsulfide. In vivo, likely functions as a BVMO, but the exact nature of the physiological substrate(s) remains to be established. Is responsible for the activation of several thiocarbamide-containing pro-drugs, such as ethionamide (ETH), isoxyl (ISO) and thiacetazone (TAC), into reactive species. This chain is FAD-containing monooxygenase EthA (ethA), found in Mycobacterium bovis (strain ATCC BAA-935 / AF2122/97).